Reading from the N-terminus, the 69-residue chain is Large ribosomal subunit protein uL29 (69 aa).

The protein belongs to the universal ribosomal protein uL29 family.

In Synechococcus sp. (strain WH7803), this protein is Large ribosomal subunit protein uL29.